The chain runs to 250 residues: 2,3-bisphosphoglycerate-dependent phosphoglycerate mutase (250 aa).

Substrate-binding positions include 8 to 15, 21 to 22, Arg-60, 87 to 90, Lys-98, 114 to 115, and 183 to 184; these read RHGESQWN, TG, ERHY, RR, and GN. His-9 acts as the Tele-phosphohistidine intermediate in catalysis. Glu-87 acts as the Proton donor/acceptor in catalysis.

Belongs to the phosphoglycerate mutase family. BPG-dependent PGAM subfamily. As to quaternary structure, homodimer.

It carries out the reaction (2R)-2-phosphoglycerate = (2R)-3-phosphoglycerate. It participates in carbohydrate degradation; glycolysis; pyruvate from D-glyceraldehyde 3-phosphate: step 3/5. Its function is as follows. Catalyzes the interconversion of 2-phosphoglycerate and 3-phosphoglycerate. In Bordetella pertussis (strain Tohama I / ATCC BAA-589 / NCTC 13251), this protein is 2,3-bisphosphoglycerate-dependent phosphoglycerate mutase.